Reading from the N-terminus, the 803-residue chain is Myb-like protein V (803 aa).

Disordered stretches follow at residues 237–333 (SNIY…LPGL) and 429–803 (KSTS…SRRK). The stretch at 258–323 (DANDKNENNN…ENNKNKRTKS (66 aa)) forms a coiled coil. Over residues 271–294 (DDADDAAADDADDADDDDMDDESD) the composition is skewed to acidic residues. A compositionally biased stretch (low complexity) spans 295 to 315 (SNNNNKNSNNKNSNNKNSNEN). The region spanning 332–379 (GLWTDEECRSLIKAVMIIGHRWIKIKEDYYSTSKRKPSQLKDKMRSLR) is the Myb-like domain. 2 coiled-coil regions span residues 400 to 429 (EIEKLAVLFQQKEEAQKLAKEKIDSLSNIK) and 463 to 496 (NNEDNQNESESENEDENDNNEKEKEKRNKKNSAV). The segment covering 429–438 (KSTSNTSAAS) has biased composition (polar residues). 2 stretches are compositionally biased toward acidic residues: residues 448-480 (NDSDEEVDQDSDNDSNNEDNQNESESENEDEND) and 510-533 (EEEESDEEHNDSEEDSQEDSEENE). Composition is skewed to basic residues over residues 537-553 (KQKRKSNQIKSSPKKLK) and 568-577 (HKSKLKSKPQ). The stretch at 573 to 616 (KSKPQRKVEKEESEKEESEEEESEEEEEEDDEDYESEEDKKKKK) forms a coiled coil. Residues 586–609 (EKEESEEEESEEEEEEDDEDYESE) show a composition bias toward acidic residues. Composition is skewed to low complexity over residues 625 to 636 (TSTHTTTTTTTT) and 666 to 733 (KKSN…PTKK). The span at 786-795 (LNKDSKENKK) shows a compositional bias: basic and acidic residues.

The protein is Myb-like protein V (mybV) of Dictyostelium discoideum (Social amoeba).